A 180-amino-acid polypeptide reads, in one-letter code: tRNA (cytidine(56)-2'-O)-methyltransferase (180 aa).

S-adenosyl-L-methionine-binding positions include L84 and 112–116 (GAEKV).

Belongs to the aTrm56 family. Homodimer.

It localises to the cytoplasm. The catalysed reaction is cytidine(56) in tRNA + S-adenosyl-L-methionine = 2'-O-methylcytidine(56) in tRNA + S-adenosyl-L-homocysteine + H(+). Its function is as follows. Specifically catalyzes the AdoMet-dependent 2'-O-ribose methylation of cytidine at position 56 in tRNAs. The polypeptide is tRNA (cytidine(56)-2'-O)-methyltransferase (Natronomonas pharaonis (strain ATCC 35678 / DSM 2160 / CIP 103997 / JCM 8858 / NBRC 14720 / NCIMB 2260 / Gabara) (Halobacterium pharaonis)).